The sequence spans 372 residues: MRSIIADSKRLVVKVGSSLVTNDGKGLDHAAIGRWAAQIAALRAQGKEVVLVSSGAIAEGMQRLGWNKRPREIDELQAAAAVGQMGLAQVYESRFTEHHIRTAQILLTHADLADRERYLNARSTLLTLLRLGVVPIINENDTVVTDEIKFGDNDTLGALVANLIEGDALIILTDQTGLFTADPRKDPNATLVAEASAGAPELESMAGGAGSSLGRGGMLTKILAAKRAAHSGANTVIASGREADVLVRLAAGEAIGTQLIARTARMAARKQWMADHLQVRGHVVIDAGAVEKLRDGGKSLLPIGVIDVQGAFARGEVIACVGPDGREVARGLTNYSSAETKLIHRKPSGEIETVLGYMLEPELIHRDNLVLV.

Lys-14 lines the ATP pocket. Substrate-binding residues include Ser-54, Asp-141, and Asn-153. An ATP-binding site is contributed by 173–174 (TD). Positions 280-358 (RGHVVIDAGA…GEIETVLGYM (79 aa)) constitute a PUA domain.

Belongs to the glutamate 5-kinase family.

The protein localises to the cytoplasm. It carries out the reaction L-glutamate + ATP = L-glutamyl 5-phosphate + ADP. The protein operates within amino-acid biosynthesis; L-proline biosynthesis; L-glutamate 5-semialdehyde from L-glutamate: step 1/2. Catalyzes the transfer of a phosphate group to glutamate to form L-glutamate 5-phosphate. This chain is Glutamate 5-kinase, found in Burkholderia vietnamiensis (strain G4 / LMG 22486) (Burkholderia cepacia (strain R1808)).